The following is a 242-amino-acid chain: RNA polymerase sigma factor for flagellar operon (242 aa).

The short motif at 55 to 68 (DMQQIGLIALVEAG) is the Polymerase core binding element. Residues 211–230 (LHEIALVLDLTPPRICQLHK) constitute a DNA-binding region (H-T-H motif).

Belongs to the sigma-70 factor family.

Sigma factors are initiation factors that promote the attachment of RNA polymerase to specific initiation sites and are then released. This alternative sigma factor is specific for the flagellin gene (fliC) expression. This chain is RNA polymerase sigma factor for flagellar operon (lafS), found in Vibrio parahaemolyticus serotype O3:K6 (strain RIMD 2210633).